We begin with the raw amino-acid sequence, 189 residues long: Interferon alpha-G (189 aa).

Residues 1 to 23 (MAPAWSLLLALLLLSCNAICSLG) form the signal peptide. 2 disulfides stabilise this stretch: Cys-24–Cys-122 and Cys-52–Cys-162.

This sequence belongs to the alpha/beta interferon family.

Its subcellular location is the secreted. Functionally, produced by macrophages, IFN-alpha have antiviral activities. Interferon stimulates the production of two enzymes: a protein kinase and an oligoadenylate synthetase. This chain is Interferon alpha-G (IFNAG), found in Bos taurus (Bovine).